Here is a 557-residue protein sequence, read N- to C-terminus: NAD(P)H-quinone oxidoreductase chain 4 (557 aa).

Transmembrane regions (helical) follow at residues Phe25 to Ile45, Tyr57 to Phe77, Leu111 to Phe131, Pro133 to Val153, Leu157 to Trp177, Phe189 to Phe209, Gly230 to Val250, Thr264 to Leu284, Phe298 to Phe318, Ile327 to Thr347, Ala353 to Ala373, Phe397 to Val417, Ile438 to Met458, and Ile485 to Met505.

The protein belongs to the complex I subunit 4 family.

It is found in the cellular thylakoid membrane. It catalyses the reaction a plastoquinone + NADH + (n+1) H(+)(in) = a plastoquinol + NAD(+) + n H(+)(out). The catalysed reaction is a plastoquinone + NADPH + (n+1) H(+)(in) = a plastoquinol + NADP(+) + n H(+)(out). Functionally, NDH-1 shuttles electrons from NAD(P)H, via FMN and iron-sulfur (Fe-S) centers, to quinones in the respiratory chain. The immediate electron acceptor for the enzyme in this species is believed to be plastoquinone. Couples the redox reaction to proton translocation (for every two electrons transferred, four hydrogen ions are translocated across the cytoplasmic membrane), and thus conserves the redox energy in a proton gradient. This Prochlorococcus marinus (strain SARG / CCMP1375 / SS120) protein is NAD(P)H-quinone oxidoreductase chain 4.